The chain runs to 20 residues: Unknown protein NF007 from 2D-PAGE (20 aa).

This Naegleria fowleri (Brain eating amoeba) protein is Unknown protein NF007 from 2D-PAGE.